The sequence spans 383 residues: uncharacterized protein (383 aa).

The YcaO domain maps to 58 to 383 (GKGATRTQAR…RVGRRIRSSI (326 aa)). A disordered region spans residues 80–100 (AERKPEDETFTAHPEDCDGLD).

This is an uncharacterized protein from Methanothermobacter thermautotrophicus (strain ATCC 29096 / DSM 1053 / JCM 10044 / NBRC 100330 / Delta H) (Methanobacterium thermoautotrophicum).